Here is a 290-residue protein sequence, read N- to C-terminus: PIH1 domain-containing protein 1 (290 aa).

Phosphoserine is present on residues Ser-12 and Ser-173.

It belongs to the PIH1 family. In terms of assembly, component of the R2TP complex composed at least of RUVBL1, RUVBL2, RPAP3 and PIHD1. Component of the PAQosome complex which is responsible for the biogenesis of several protein complexes and which consists of R2TP complex members RUVBL1, RUVBL2, RPAP3 and PIH1D1, URI complex members PFDN2, PFDN6, PDRG1, UXT and URI1 as well as ASDURF, POLR2E and DNAAF10/WDR92. Interacts with phosphorylated TELO2 and mediates interaction of TELO2 with the R2TP complex. Interacts with phosphorylated ECD, EFTUD2/SNRP116, RPB1 and UBR5 and with RPB1 in a phosphorylation-independent manner. Interacts with the core C/D box snoRNP particle components NOP58 and FBL and with RUVBL1/TIP49. Interacts with RPAP3 and DNAAF10. Interacts with histone H4 and with SWI/SNF complex member SMARCB1/SNF5. Interacts with the mTORC1 complex member RPTOR. Interacts with MSL1. In terms of tissue distribution, expressed at low levels in normal mammary epithelial cells (at protein level). Highest expression in lung, leukocyte and placenta. Expressed at lower levels in brain, prostate, colon, heart, small intestine, liver, ovary, pancreas, skeletal muscle, spleen, testis and thymus.

The protein resides in the nucleus. Its function is as follows. Involved in the assembly of C/D box small nucleolar ribonucleoprotein (snoRNP) particles. Recruits the SWI/SNF complex to the core promoter of rRNA genes and enhances pre-rRNA transcription. Mediates interaction of TELO2 with the R2TP complex which is necessary for the stability of MTOR and SMG1. Positively regulates the assembly and activity of the mTORC1 complex. This chain is PIH1 domain-containing protein 1 (PIH1D1), found in Homo sapiens (Human).